A 378-amino-acid polypeptide reads, in one-letter code: Erythronate-4-phosphate dehydrogenase (378 aa).

Substrate contacts are provided by S45 and T66. D146 and T175 together coordinate NAD(+). Residue R208 is part of the active site. Residue D232 participates in NAD(+) binding. Residue E237 is part of the active site. H254 functions as the Proton donor in the catalytic mechanism. G257 contributes to the NAD(+) binding site. Y258 provides a ligand contact to substrate.

Belongs to the D-isomer specific 2-hydroxyacid dehydrogenase family. PdxB subfamily. In terms of assembly, homodimer.

The protein localises to the cytoplasm. The enzyme catalyses 4-phospho-D-erythronate + NAD(+) = (R)-3-hydroxy-2-oxo-4-phosphooxybutanoate + NADH + H(+). It functions in the pathway cofactor biosynthesis; pyridoxine 5'-phosphate biosynthesis; pyridoxine 5'-phosphate from D-erythrose 4-phosphate: step 2/5. In terms of biological role, catalyzes the oxidation of erythronate-4-phosphate to 3-hydroxy-2-oxo-4-phosphonooxybutanoate. The chain is Erythronate-4-phosphate dehydrogenase from Escherichia coli O127:H6 (strain E2348/69 / EPEC).